The chain runs to 309 residues: Probable lipid kinase YegS-like (309 aa).

The DAGKc domain maps to 1-134 (MTTPRWRLIL…IDLLRVDADG (134 aa)). Residues T39, 65-71 (GDGTLSA), and T96 contribute to the ATP site. 3 residues coordinate Mg(2+): L219, D222, and L224. Residue E280 is the Proton acceptor of the active site.

Belongs to the diacylglycerol/lipid kinase family. YegS lipid kinase subfamily. Mg(2+) serves as cofactor. Requires Ca(2+) as cofactor.

The protein localises to the cytoplasm. Probably phosphorylates lipids; the in vivo substrate is unknown. This is Probable lipid kinase YegS-like from Stenotrophomonas maltophilia (strain K279a).